A 460-amino-acid chain; its full sequence is Argininosuccinate lyase (460 aa).

Belongs to the lyase 1 family. Argininosuccinate lyase subfamily.

The protein resides in the cytoplasm. The enzyme catalyses 2-(N(omega)-L-arginino)succinate = fumarate + L-arginine. It participates in amino-acid biosynthesis; L-arginine biosynthesis; L-arginine from L-ornithine and carbamoyl phosphate: step 3/3. In Desulforamulus reducens (strain ATCC BAA-1160 / DSM 100696 / MI-1) (Desulfotomaculum reducens), this protein is Argininosuccinate lyase.